The following is a 73-amino-acid chain: Translation initiation factor IF-1 (73 aa).

The region spanning 1–73 (MSEKEAGIEV…TRGRITYRDK (73 aa)) is the S1-like domain.

The protein belongs to the IF-1 family. As to quaternary structure, component of the 30S ribosomal translation pre-initiation complex which assembles on the 30S ribosome in the order IF-2 and IF-3, IF-1 and N-formylmethionyl-tRNA(fMet); mRNA recruitment can occur at any time during PIC assembly.

It is found in the cytoplasm. Its function is as follows. One of the essential components for the initiation of protein synthesis. Stabilizes the binding of IF-2 and IF-3 on the 30S subunit to which N-formylmethionyl-tRNA(fMet) subsequently binds. Helps modulate mRNA selection, yielding the 30S pre-initiation complex (PIC). Upon addition of the 50S ribosomal subunit IF-1, IF-2 and IF-3 are released leaving the mature 70S translation initiation complex. The polypeptide is Translation initiation factor IF-1 (Anaeromyxobacter sp. (strain Fw109-5)).